A 238-amino-acid polypeptide reads, in one-letter code: Large ribosomal subunit protein uL5c (238 aa).

It belongs to the universal ribosomal protein uL5 family. In terms of assembly, part of the 50S ribosomal subunit; contacts the 5S rRNA.

Its subcellular location is the plastid. It localises to the chloroplast. Binds 5S rRNA, forms part of the central protuberance of the 50S subunit. The sequence is that of Large ribosomal subunit protein uL5c (rpl5) from Phaeodactylum tricornutum (strain CCAP 1055/1).